A 307-amino-acid polypeptide reads, in one-letter code: MmsAB operon regulatory protein (307 aa).

Residues 201-299 (DGLHAYMREH…GLSPSAYRQR (99 aa)) enclose the HTH araC/xylS-type domain. DNA-binding regions (H-T-H motif) lie at residues 218–239 (ERLAAFCNLSKFHFVSRYKAIT) and 266–289 (VARVGQAVGYDDSYYFSRLFSKVM).

Its function is as follows. Regulatory protein for the mmsAB operon. Activates the transcription of the mmsAB genes. The polypeptide is MmsAB operon regulatory protein (Pseudomonas aeruginosa (strain ATCC 15692 / DSM 22644 / CIP 104116 / JCM 14847 / LMG 12228 / 1C / PRS 101 / PAO1)).